We begin with the raw amino-acid sequence, 416 residues long: 4-hydroxy-3-methylbut-2-en-1-yl diphosphate synthase (flavodoxin) (416 aa).

4 residues coordinate [4Fe-4S] cluster: C304, C307, C350, and E357.

This sequence belongs to the IspG family. The cofactor is [4Fe-4S] cluster.

It carries out the reaction (2E)-4-hydroxy-3-methylbut-2-enyl diphosphate + oxidized [flavodoxin] + H2O + 2 H(+) = 2-C-methyl-D-erythritol 2,4-cyclic diphosphate + reduced [flavodoxin]. The protein operates within isoprenoid biosynthesis; isopentenyl diphosphate biosynthesis via DXP pathway; isopentenyl diphosphate from 1-deoxy-D-xylulose 5-phosphate: step 5/6. Functionally, converts 2C-methyl-D-erythritol 2,4-cyclodiphosphate (ME-2,4cPP) into 1-hydroxy-2-methyl-2-(E)-butenyl 4-diphosphate. In Rhizobium etli (strain CIAT 652), this protein is 4-hydroxy-3-methylbut-2-en-1-yl diphosphate synthase (flavodoxin).